The sequence spans 288 residues: Aquaporin PIP1-5 (288 aa).

The interval methionine 1–proline 36 is disordered. Helical transmembrane passes span isoleucine 57 to valine 77 and isoleucine 92 to histidine 114. An NPA 1 motif is present at residues asparagine 116 to alanine 118. 3 consecutive transmembrane segments (helical) span residues leucine 135 to phenylalanine 155, glycine 177 to alanine 197, and isoleucine 211 to isoleucine 231. Residues asparagine 237–alanine 239 carry the NPA 2 motif. A helical transmembrane segment spans residues isoleucine 259–isoleucine 279.

It belongs to the MIP/aquaporin (TC 1.A.8) family. PIP (TC 1.A.8.11) subfamily. In terms of tissue distribution, highly expressed in roots and at lower levels in anthers and silks.

Its subcellular location is the cell membrane. In terms of biological role, water channel required to facilitate the transport of water across cell membrane. The chain is Aquaporin PIP1-5 (PIP1-5) from Zea mays (Maize).